The primary structure comprises 341 residues: N-acetyl-gamma-glutamyl-phosphate reductase (341 aa).

Cys147 is an active-site residue.

The protein belongs to the NAGSA dehydrogenase family. Type 1 subfamily.

It localises to the cytoplasm. The enzyme catalyses N-acetyl-L-glutamate 5-semialdehyde + phosphate + NADP(+) = N-acetyl-L-glutamyl 5-phosphate + NADPH + H(+). It functions in the pathway amino-acid biosynthesis; L-arginine biosynthesis; N(2)-acetyl-L-ornithine from L-glutamate: step 3/4. Catalyzes the NADPH-dependent reduction of N-acetyl-5-glutamyl phosphate to yield N-acetyl-L-glutamate 5-semialdehyde. The chain is N-acetyl-gamma-glutamyl-phosphate reductase from Dehalococcoides mccartyi (strain ATCC BAA-2266 / KCTC 15142 / 195) (Dehalococcoides ethenogenes (strain 195)).